We begin with the raw amino-acid sequence, 223 residues long: Golgi to ER traffic protein 1 (223 aa).

Met-1 is a topological domain (lumenal). The chain crosses the membrane as a helical span at residues 2-21 (SWVVAIAVVFVVVLKVLEYS). Residues 22-105 (TSYHDLVLQS…QIKGHLKKVK (84 aa)) lie on the Cytoplasmic side of the membrane. A coiled-coil region spans residues 56–105 (ENKSISAQDNYAKWTKNNRKLDKLDKEITELGAQLKAHNEQIKGHLKKVK). The chain crosses the membrane as a helical span at residues 106 to 126 (LLLLTVPFLCFKLWKGKHIVY). Residues 127-177 (NLPHHQMFPQLVAGVWSQGWLYLAILPLQLAKSIVTGSSFAIETASFPHMG) are Lumenal-facing. Residues 178–194 (VSLGIWLWALNSVISNI) traverse the membrane as a helical segment. The Cytoplasmic portion of the chain corresponds to 195–223 (EFMTMQLWAKPVSKPSKKLEIVTDEIKVD).

It belongs to the WRB/GET1 family. As to quaternary structure, component of the Golgi to ER traffic (GET) complex, which is composed of GET1, GET2 and GET3. Within the complex, GET1 and GET2 form a heterotetramer which is stabilized by phosphatidylinositol binding and which binds to the GET3 homodimer.

The protein localises to the endoplasmic reticulum membrane. It is found in the golgi apparatus membrane. Functionally, required for the post-translational delivery of tail-anchored (TA) proteins to the endoplasmic reticulum. Together with GET2, acts as a membrane receptor for soluble GET3, which recognizes and selectively binds the transmembrane domain of TA proteins in the cytosol. The GET complex cooperates with the HDEL receptor ERD2 to mediate the ATP-dependent retrieval of resident ER proteins that contain a C-terminal H-D-E-L retention signal from the Golgi to the ER. This is Golgi to ER traffic protein 1 from Candida glabrata (strain ATCC 2001 / BCRC 20586 / JCM 3761 / NBRC 0622 / NRRL Y-65 / CBS 138) (Yeast).